The chain runs to 150 residues: Ribonuclease K6 (150 aa).

The N-terminal stretch at 1–23 is a signal peptide; that stretch reads MVLCFPLLLLLLVLWGPVCPLHA. Catalysis depends on His-38, which acts as the Proton acceptor. Disulfide bonds link Cys-46/Cys-104, Cys-60/Cys-114, Cys-78/Cys-129, and Cys-85/Cys-92. Residue Asn-55 is glycosylated (N-linked (GlcNAc...) asparagine). Substrate is bound by residues 61 to 65 and Lys-86; that span reads KHQNT. Residue Asn-100 is glycosylated (N-linked (GlcNAc...) asparagine). Arg-105 contributes to the substrate binding site. The active-site Proton donor is the His-145.

Belongs to the pancreatic ribonuclease family. In terms of assembly, interacts (via N-terminus) with bacterial lipopolysaccharide (LPS). In terms of tissue distribution, highly expressed in spleen (at protein level). Has little or no expression in healthy kidneys (at protein level). Detected in interstitial leukocytes in infected kidneys (at protein level). Expressed in ureter where it localizes to urothelial and submucosal leukocytes (at protein level). Strong expression in lung and thymus, and lower expression in heart, placenta, pancreas, liver, brain and skeletal muscle. Also expressed in monocytes and neutrophils.

Its subcellular location is the secreted. It localises to the lysosome. The protein resides in the cytoplasmic granule. Functionally, ribonuclease which shows a preference for the pyrimidines uridine and cytosine. Has potent antibacterial activity against a range of Gram-positive and Gram-negative bacteria, including P.aeruginosa, A.baumanii, M.luteus, S.aureus, E.faecalis, E.faecium, S.saprophyticus and E.coli. Causes loss of bacterial membrane integrity, and also promotes agglutination of Gram-negative bacteria. Probably contributes to urinary tract sterility. Bactericidal activity is independent of RNase activity. This chain is Ribonuclease K6 (RNASE6), found in Homo sapiens (Human).